A 545-amino-acid chain; its full sequence is Glucose-6-phosphate isomerase (545 aa).

E343 acts as the Proton donor in catalysis. Residues H374 and K513 contribute to the active site.

Belongs to the GPI family.

It localises to the cytoplasm. It catalyses the reaction alpha-D-glucose 6-phosphate = beta-D-fructose 6-phosphate. It participates in carbohydrate biosynthesis; gluconeogenesis. The protein operates within carbohydrate degradation; glycolysis; D-glyceraldehyde 3-phosphate and glycerone phosphate from D-glucose: step 2/4. Catalyzes the reversible isomerization of glucose-6-phosphate to fructose-6-phosphate. In Methylibium petroleiphilum (strain ATCC BAA-1232 / LMG 22953 / PM1), this protein is Glucose-6-phosphate isomerase.